A 314-amino-acid polypeptide reads, in one-letter code: Protein phosphatase PTC7 homolog fig (314 aa).

The region spanning 43 to 309 is the PPM-type phosphatase domain; it reads PYLVTVVQGR…DDITLILSSV (267 aa). Residues Asp87, Gly88, and Asp232 each coordinate Mn(2+).

It belongs to the PP2C family. The cofactor is Mg(2+). Requires Mn(2+) as cofactor.

The catalysed reaction is O-phospho-L-seryl-[protein] + H2O = L-seryl-[protein] + phosphate. It carries out the reaction O-phospho-L-threonyl-[protein] + H2O = L-threonyl-[protein] + phosphate. In Drosophila melanogaster (Fruit fly), this protein is Protein phosphatase PTC7 homolog fig.